A 524-amino-acid polypeptide reads, in one-letter code: CTP synthase (524 aa).

The amidoligase domain stretch occupies residues 1 to 263; sequence MKKYVIVTGG…HEKIASKLNV (263 aa). Residue Ser-13 coordinates CTP. Position 13 (Ser-13) interacts with UTP. ATP-binding positions include 14-19 and Asp-71; that span reads GIGKGI. Residues Asp-71 and Glu-137 each coordinate Mg(2+). CTP is bound by residues 144–146, 184–189, and Lys-220; these read DIE and KTKPTQ. Residues 184 to 189 and Lys-220 contribute to the UTP site; that span reads KTKPTQ. The Glutamine amidotransferase type-1 domain occupies 282 to 524; that stretch reads RIALVGKYLG…YLRKVLEGSQ (243 aa). An L-glutamine-binding site is contributed by Gly-342. Cys-369 functions as the Nucleophile; for glutamine hydrolysis in the catalytic mechanism. L-glutamine contacts are provided by residues 370-373, Glu-393, and Arg-451; that span reads LGMQ. Residues His-499 and Glu-501 contribute to the active site.

Belongs to the CTP synthase family. In terms of assembly, homotetramer.

It carries out the reaction UTP + L-glutamine + ATP + H2O = CTP + L-glutamate + ADP + phosphate + 2 H(+). The catalysed reaction is L-glutamine + H2O = L-glutamate + NH4(+). The enzyme catalyses UTP + NH4(+) + ATP = CTP + ADP + phosphate + 2 H(+). It functions in the pathway pyrimidine metabolism; CTP biosynthesis via de novo pathway; CTP from UDP: step 2/2. Allosterically activated by GTP, when glutamine is the substrate; GTP has no effect on the reaction when ammonia is the substrate. The allosteric effector GTP functions by stabilizing the protein conformation that binds the tetrahedral intermediate(s) formed during glutamine hydrolysis. Inhibited by the product CTP, via allosteric rather than competitive inhibition. Catalyzes the ATP-dependent amination of UTP to CTP with either L-glutamine or ammonia as the source of nitrogen. Regulates intracellular CTP levels through interactions with the four ribonucleotide triphosphates. The polypeptide is CTP synthase (Thermotoga maritima (strain ATCC 43589 / DSM 3109 / JCM 10099 / NBRC 100826 / MSB8)).